Here is a 108-residue protein sequence, read N- to C-terminus: Urease subunit beta (108 aa).

This sequence belongs to the urease beta subunit family. Heterotrimer of UreA (gamma), UreB (beta) and UreC (alpha) subunits. Three heterotrimers associate to form the active enzyme.

It is found in the cytoplasm. It carries out the reaction urea + 2 H2O + H(+) = hydrogencarbonate + 2 NH4(+). It functions in the pathway nitrogen metabolism; urea degradation; CO(2) and NH(3) from urea (urease route): step 1/1. This Nocardia farcinica (strain IFM 10152) protein is Urease subunit beta.